Consider the following 342-residue polypeptide: Nucleoid-associated protein Shewmr4_2217 (342 aa).

It belongs to the YejK family.

It localises to the cytoplasm. Its subcellular location is the nucleoid. This is Nucleoid-associated protein Shewmr4_2217 from Shewanella sp. (strain MR-4).